A 109-amino-acid polypeptide reads, in one-letter code: uncharacterized protein (109 aa).

A helical membrane pass occupies residues 12–32; it reads PNILIKGVYIFVLYGMCICIV.

It localises to the membrane. This is an uncharacterized protein from Saccharomyces cerevisiae (strain ATCC 204508 / S288c) (Baker's yeast).